Here is a 290-residue protein sequence, read N- to C-terminus: ATP synthase gamma chain (290 aa).

It belongs to the ATPase gamma chain family. F-type ATPases have 2 components, CF(1) - the catalytic core - and CF(0) - the membrane proton channel. CF(1) has five subunits: alpha(3), beta(3), gamma(1), delta(1), epsilon(1). CF(0) has three main subunits: a, b and c.

The protein localises to the cell membrane. In terms of biological role, produces ATP from ADP in the presence of a proton gradient across the membrane. The gamma chain is believed to be important in regulating ATPase activity and the flow of protons through the CF(0) complex. In Buchnera aphidicola subsp. Acyrthosiphon pisum (strain 5A), this protein is ATP synthase gamma chain.